A 159-amino-acid polypeptide reads, in one-letter code: Nucleotide-binding protein Avin_13410 (159 aa).

It belongs to the YajQ family.

In terms of biological role, nucleotide-binding protein. This Azotobacter vinelandii (strain DJ / ATCC BAA-1303) protein is Nucleotide-binding protein Avin_13410.